Here is a 528-residue protein sequence, read N- to C-terminus: Major facilitator superfamily multidrug transporter mdr3 (528 aa).

Residues 1 to 37 (MLAMAASAEETNRQSNAGRRSVISPSEAPPEAEQSDV) form a disordered region. 7 helical membrane passes run 50–70 (FILILCSTQLFVQGAFGYILI), 91–111 (WHVGGYSLTVGTFILIAGKLG), 119–139 (ILVLGWAWFGVWSVIGGCSAF), 149–169 (ARALQGIGPALLLPNALAIAG), 180–200 (MIFSAFAVAAPLGCFTAGVVG), 211–231 (WVMWTYSIGCFIIAAVGLWVI), and 241–261 (AATLQFDYIGSVLGVAGLLLL). An N-linked (GlcNAc...) asparagine glycan is attached at Asn-262. 5 helical membrane-spanning segments follow: residues 272–292 (GWSTPYVYVLLIGGFLVLGLF), 340–360 (VITSGWLMAIACAAFLGGCIL), 375–395 (FWSFVIMAWGMDISFPASTTI), 410–430 (SLVNTVINYSIAIGLGIAGTV), and 448–468 (ALWSSVGLAALAFGIALVFAV).

It belongs to the major facilitator superfamily.

It localises to the cell membrane. In terms of biological role, major facilitator superfamily transporter that confers resistance to azoles such as itraconazole. The protein is Major facilitator superfamily multidrug transporter mdr3 of Aspergillus fumigatus (strain ATCC MYA-4609 / CBS 101355 / FGSC A1100 / Af293) (Neosartorya fumigata).